A 281-amino-acid polypeptide reads, in one-letter code: MENSEKTEVVLLACGSFNPITNMHLRLFELAKDYMNGTGKYKVIKGIISPVGDAYKKKGLISAYHRVIMAELATKNSKWVEVDTWESLQKEWTETAKVLRHHQEKLEASICDPQQNSPVLEKPGRKRKWAEQKQDISEKKSLEQTKTKGVPKVKLLCGADFLESFGVPNLWKSEDITKILGDYGLICITRAGNDAQKFIYESDVLWKHQNNIHLVNEWITNDISSTKIRRALRRGQSIRYLVPDLVEEYIEKHNLYSSESEERNVGVVLAPLQRNTTEVKA.

The beta-nicotinamide D-ribonucleotide site is built by Gly-15 and Ser-16. Gly-15, Ser-16, Phe-17, and Met-23 together coordinate NAD(+). Residue 15–17 participates in ATP binding; it reads GSF. An ATP-binding site is contributed by His-24. Beta-nicotinamide D-ribonucleotide contacts are provided by Tyr-55 and Lys-57. Residue Lys-57 coordinates NAD(+). Residue Lys-58 coordinates ATP. Positions 92 and 95 each coordinate beta-nicotinamide D-ribonucleotide. 2 residues coordinate NAD(+): Trp-92 and Thr-95. The segment at 113–143 is disordered; it reads PQQNSPVLEKPGRKRKWAEQKQDISEKKSLE. A Phosphoserine modification is found at Ser-117. The Nuclear localization signal signature appears at 123 to 129; sequence PGRKRKW. Residues 129–143 show a composition bias toward basic and acidic residues; it reads WAEQKQDISEKKSLE. Residues Gly-158, Asp-160, Leu-170, Trp-171, Glu-217, and Asn-221 each coordinate NAD(+). An ATP-binding site is contributed by 158-160; that stretch reads GAD. Residues Leu-170 and Trp-171 each coordinate beta-nicotinamide D-ribonucleotide. 226–229 is an ATP binding site; that stretch reads TKIR.

The protein belongs to the eukaryotic NMN adenylyltransferase family. Homohexamer. Interacts with ADPRT/PARP1. Requires Zn(2+) as cofactor. The cofactor is Mg(2+).

The protein localises to the nucleus. It catalyses the reaction beta-nicotinamide D-ribonucleotide + ATP + H(+) = diphosphate + NAD(+). It carries out the reaction nicotinate beta-D-ribonucleotide + ATP + H(+) = deamido-NAD(+) + diphosphate. Its pathway is cofactor biosynthesis; NAD(+) biosynthesis; NAD(+) from nicotinamide D-ribonucleotide: step 1/1. It functions in the pathway cofactor biosynthesis; NAD(+) biosynthesis; deamido-NAD(+) from nicotinate D-ribonucleotide: step 1/1. With respect to regulation, activity is strongly inhibited by galotannin. Inhibited by P1-(adenosine-5')-P4-(nicotinic-acid-riboside-5')-tetraphosphate (Nap4AD). In terms of biological role, catalyzes the formation of NAD(+) from nicotinamide mononucleotide (NMN) and ATP. Can also use the deamidated form; nicotinic acid mononucleotide (NaMN) as substrate with the same efficiency. Can use triazofurin monophosphate (TrMP) as substrate. Also catalyzes the reverse reaction, i.e. the pyrophosphorolytic cleavage of NAD(+). For the pyrophosphorolytic activity, prefers NAD(+) and NaAD as substrates and degrades NADH, nicotinic acid adenine dinucleotide phosphate (NHD) and nicotinamide guanine dinucleotide (NGD) less effectively. Involved in the synthesis of ATP in the nucleus, together with PARP1, PARG and NUDT5. Nuclear ATP generation is required for extensive chromatin remodeling events that are energy-consuming. Fails to cleave phosphorylated dinucleotides NADP(+), NADPH and NaADP(+). Also acts as a cofactor for glutamate and aspartate ADP-ribosylation by directing PARP1 catalytic activity to glutamate and aspartate residues on histones. Protects against axonal degeneration following mechanical or toxic insults. Delays axonal degeneration after axotomy. Results in a &gt;10-fold increase in intact neurites 72 hours after injury. Neural protection does not correlate with cellular NAD(+) levels but may still require enzyme activity. This Bos taurus (Bovine) protein is Nicotinamide/nicotinic acid mononucleotide adenylyltransferase 1 (NMNAT1).